Reading from the N-terminus, the 424-residue chain is Tyrosine--tRNA ligase (424 aa).

Tyr-37 is a binding site for L-tyrosine. The 'HIGH' region signature appears at 42–51; sequence PTADSLHLGH. The L-tyrosine site is built by Tyr-175 and Gln-179. The 'KMSKS' region motif lies at 235–239; the sequence is KFGKT. Residue Lys-238 coordinates ATP. The S4 RNA-binding domain maps to 357–414; the sequence is AELQKALVSAQLAPSRSQARTLIQSSSISVNGKKQLKPEYIFTSEDRLLDRYTLLRRG.

It belongs to the class-I aminoacyl-tRNA synthetase family. TyrS type 1 subfamily. Homodimer.

It localises to the cytoplasm. It catalyses the reaction tRNA(Tyr) + L-tyrosine + ATP = L-tyrosyl-tRNA(Tyr) + AMP + diphosphate + H(+). In terms of biological role, catalyzes the attachment of tyrosine to tRNA(Tyr) in a two-step reaction: tyrosine is first activated by ATP to form Tyr-AMP and then transferred to the acceptor end of tRNA(Tyr). The chain is Tyrosine--tRNA ligase from Hamiltonella defensa subsp. Acyrthosiphon pisum (strain 5AT).